A 148-amino-acid chain; its full sequence is Hemoglobin subunit beta (148 aa).

The Globin domain maps to 3 to 148; that stretch reads XWTDXERAAI…VVSALGRQYH (146 aa). Positions 64 and 93 each coordinate heme b.

Belongs to the globin family. In terms of assembly, heterotetramer of two alpha chains and two beta chains. In terms of tissue distribution, red blood cells.

Functionally, involved in oxygen transport from gills to the various peripheral tissues. In Decapterus maruadsi (Japanese scad), this protein is Hemoglobin subunit beta (hbb).